The chain runs to 568 residues: Chaperonin homolog Hsp-60, mitochondrial (568 aa).

Belongs to the chaperonin (HSP60) family.

Its subcellular location is the mitochondrion matrix. Its function is as follows. Implicated in mitochondrial protein import and macromolecular assembly. May facilitate the correct folding of imported proteins. May also prevent misfolding and promote the refolding and proper assembly of unfolded polypeptides generated under stress conditions in the mitochondrial matrix. This chain is Chaperonin homolog Hsp-60, mitochondrial (hsp-60), found in Caenorhabditis elegans.